A 349-amino-acid polypeptide reads, in one-letter code: tRNA pseudouridine synthase D (349 aa).

F27 is a substrate binding site. D80 (nucleophile) is an active-site residue. N129 provides a ligand contact to substrate. The TRUD domain maps to G155–L303. F329 serves as a coordination point for substrate.

The protein belongs to the pseudouridine synthase TruD family.

It carries out the reaction uridine(13) in tRNA = pseudouridine(13) in tRNA. Its function is as follows. Responsible for synthesis of pseudouridine from uracil-13 in transfer RNAs. In Escherichia coli O6:K15:H31 (strain 536 / UPEC), this protein is tRNA pseudouridine synthase D.